The sequence spans 598 residues: NADH-ubiquinone oxidoreductase chain 5 (598 aa).

16 helical membrane-spanning segments follow: residues 1–21, 28–48, 81–101, 115–135, 171–191, 193–213, 233–253, 265–285, 293–312, 323–343, 362–382, 399–421, 454–474, 480–500, 509–529, and 576–596; these read MLELWGVLSLTSLGVMVIFLF, FAESVKYAGYMNAVLLSILLM, CFFVVGLYVTWNILMFSFYYM, GLFLIAMLLLVSAESLFQLLI, GDIGLLIMLMWSLVTLGDWSF, GLYALDFVNTFFLLGVVLAAA, TPVSSLLHSSTMVVAGVFLLI, IQLMVFFLGTMTTLFSAICAL, VVAFSTASQLGLMVTAVGAG, MHAFFKAMLFMCSGSFIHGLQ, SVCFFIGSAALMGVPFLAGFF, WAVGLVLIATSFTAAYSVRLLYF, VIAGVVFIYFLSPNQISCLSL, LAAVFVTLVGGLIAWDVVNLL, IPELAFEAQVGFYPLIMHKLI, and LIKMYIAVMVMMGGLILGIMI.

Belongs to the complex I subunit 5 family.

Its subcellular location is the mitochondrion inner membrane. It carries out the reaction a ubiquinone + NADH + 5 H(+)(in) = a ubiquinol + NAD(+) + 4 H(+)(out). Its function is as follows. Core subunit of the mitochondrial membrane respiratory chain NADH dehydrogenase (Complex I) that is believed to belong to the minimal assembly required for catalysis. Complex I functions in the transfer of electrons from NADH to the respiratory chain. The immediate electron acceptor for the enzyme is believed to be ubiquinone. In Branchiostoma lanceolatum (Common lancelet), this protein is NADH-ubiquinone oxidoreductase chain 5 (ND5).